A 96-amino-acid polypeptide reads, in one-letter code: Co-chaperonin GroES (96 aa).

The protein belongs to the GroES chaperonin family. In terms of assembly, heptamer of 7 subunits arranged in a ring. Interacts with the chaperonin GroEL.

The protein localises to the cytoplasm. Its function is as follows. Together with the chaperonin GroEL, plays an essential role in assisting protein folding. The GroEL-GroES system forms a nano-cage that allows encapsulation of the non-native substrate proteins and provides a physical environment optimized to promote and accelerate protein folding. GroES binds to the apical surface of the GroEL ring, thereby capping the opening of the GroEL channel. The protein is Co-chaperonin GroES of Verminephrobacter eiseniae (strain EF01-2).